A 449-amino-acid polypeptide reads, in one-letter code: Bifunctional protein GlmU (449 aa).

Residues Met-1–Arg-230 are pyrophosphorylase. UDP-N-acetyl-alpha-D-glucosamine contacts are provided by residues Leu-11–Gly-14, Lys-25, Gln-74, Gly-79–Thr-80, Tyr-102–Asp-104, Gly-142, Glu-156, Asn-171, and Asn-228. Asp-104 is a Mg(2+) binding site. Position 228 (Asn-228) interacts with Mg(2+). The tract at residues Ser-231 to Asn-251 is linker. Positions Gly-252 to Asp-449 are N-acetyltransferase. Positions 317 and 335 each coordinate UDP-N-acetyl-alpha-D-glucosamine. The Proton acceptor role is filled by His-347. UDP-N-acetyl-alpha-D-glucosamine contacts are provided by Tyr-350 and Asn-361. Residues Ala-364, Asn-370–Tyr-371, Ser-389, Ala-407, and Arg-424 each bind acetyl-CoA.

This sequence in the N-terminal section; belongs to the N-acetylglucosamine-1-phosphate uridyltransferase family. The protein in the C-terminal section; belongs to the transferase hexapeptide repeat family. In terms of assembly, homotrimer. Mg(2+) serves as cofactor.

It is found in the cytoplasm. It catalyses the reaction alpha-D-glucosamine 1-phosphate + acetyl-CoA = N-acetyl-alpha-D-glucosamine 1-phosphate + CoA + H(+). The catalysed reaction is N-acetyl-alpha-D-glucosamine 1-phosphate + UTP + H(+) = UDP-N-acetyl-alpha-D-glucosamine + diphosphate. Its pathway is nucleotide-sugar biosynthesis; UDP-N-acetyl-alpha-D-glucosamine biosynthesis; N-acetyl-alpha-D-glucosamine 1-phosphate from alpha-D-glucosamine 6-phosphate (route II): step 2/2. It participates in nucleotide-sugar biosynthesis; UDP-N-acetyl-alpha-D-glucosamine biosynthesis; UDP-N-acetyl-alpha-D-glucosamine from N-acetyl-alpha-D-glucosamine 1-phosphate: step 1/1. It functions in the pathway bacterial outer membrane biogenesis; LPS lipid A biosynthesis. Functionally, catalyzes the last two sequential reactions in the de novo biosynthetic pathway for UDP-N-acetylglucosamine (UDP-GlcNAc). The C-terminal domain catalyzes the transfer of acetyl group from acetyl coenzyme A to glucosamine-1-phosphate (GlcN-1-P) to produce N-acetylglucosamine-1-phosphate (GlcNAc-1-P), which is converted into UDP-GlcNAc by the transfer of uridine 5-monophosphate (from uridine 5-triphosphate), a reaction catalyzed by the N-terminal domain. The chain is Bifunctional protein GlmU from Paramagnetospirillum magneticum (strain ATCC 700264 / AMB-1) (Magnetospirillum magneticum).